Here is a 241-residue protein sequence, read N- to C-terminus: 1-(5-phosphoribosyl)-5-[(5-phosphoribosylamino)methylideneamino] imidazole-4-carboxamide isomerase (241 aa).

The Proton acceptor role is filled by Asp-8. The Proton donor role is filled by Asp-129.

The protein belongs to the HisA/HisF family.

The protein resides in the cytoplasm. The catalysed reaction is 1-(5-phospho-beta-D-ribosyl)-5-[(5-phospho-beta-D-ribosylamino)methylideneamino]imidazole-4-carboxamide = 5-[(5-phospho-1-deoxy-D-ribulos-1-ylimino)methylamino]-1-(5-phospho-beta-D-ribosyl)imidazole-4-carboxamide. Its pathway is amino-acid biosynthesis; L-histidine biosynthesis; L-histidine from 5-phospho-alpha-D-ribose 1-diphosphate: step 4/9. The protein is 1-(5-phosphoribosyl)-5-[(5-phosphoribosylamino)methylideneamino] imidazole-4-carboxamide isomerase of Chloroflexus aggregans (strain MD-66 / DSM 9485).